Consider the following 289-residue polypeptide: Small ribosomal subunit protein uS2C (289 aa).

This sequence belongs to the universal ribosomal protein uS2 family. In terms of assembly, component of the small ribosomal subunit. Mature ribosomes consist of a small (40S) and a large (60S) subunit. The 40S subunit contains about 33 different proteins and 1 molecule of RNA (18S). The 60S subunit contains about 49 different proteins and 3 molecules of RNA (25S, 5.8S and 5S). Interacts with rps21.

The protein resides in the cytoplasm. In terms of biological role, required for the assembly and/or stability of the 40S ribosomal subunit. Required for the processing of the 20S rRNA-precursor to mature 18S rRNA in a late step of the maturation of 40S ribosomal subunits. The polypeptide is Small ribosomal subunit protein uS2C (rps0c) (Schizosaccharomyces japonicus (strain yFS275 / FY16936) (Fission yeast)).